The chain runs to 301 residues: ATP synthase gamma chain (301 aa).

Belongs to the ATPase gamma chain family. F-type ATPases have 2 components, CF(1) - the catalytic core - and CF(0) - the membrane proton channel. CF(1) has five subunits: alpha(3), beta(3), gamma(1), delta(1), epsilon(1). CF(0) has three main subunits: a, b and c.

It localises to the cell inner membrane. Functionally, produces ATP from ADP in the presence of a proton gradient across the membrane. The gamma chain is believed to be important in regulating ATPase activity and the flow of protons through the CF(0) complex. This Bordetella parapertussis (strain 12822 / ATCC BAA-587 / NCTC 13253) protein is ATP synthase gamma chain.